Reading from the N-terminus, the 516-residue chain is MTLDLDALDRALDALPNLFRGPGGVAGVVKDGQVVASRAWGYADLTRRRPMETATRLPICSISKQFTCGVLLDTLGDTAAYDARVAEFLPQFEGPLPTLRQLCDNQSGLRDYWALTVLQGAEATQTFRREDALPLIARMKTGHFPPGTAYSYCNCNFRIVSEILESETGRALPDLYAERIFGPAGMRTAELTSDTRHPADEVVGYEGSDAVGFFPADNGIFWIGDAGISASLQDMLAYESWIDATRDDENSIYRRISVPPAYVCGTPASYGFGLSHETVAGVKVTGHGGALRGFRAQRFHAADERLSVMVIFNHEASAHAAASSLLAAALGHEAPKGARPEGWAGQWLDPESGLLLRVGEDAEGLTLRFATGPDRLTLGEDGVPRGAGVSLARDGAMLVMNRTSDNLTVRAEPLPVVTVADAGEIAGRYHARELEADLVIEARDGGAYAGFEGLLGEGPMERLHPVGPDVWIVTTRRSMDAPAPGDWTLQVRREGGAVTGLRLGCWLARRIDYARV.

Ser-61 functions as the Nucleophile in the catalytic mechanism. Catalysis depends on Lys-64, which acts as the Proton donor/acceptor. The important for specificity stretch occupies residues 476–486 (RRSMDAPAPGD). Substrate is bound at residue Asp-480.

It belongs to the peptidase S12 family. In terms of assembly, homodimer.

The enzyme catalyses Release of an N-terminal D-amino acid from a peptide, Xaa-|-Yaa-, in which Xaa is preferably D-Ala, D-Ser or D-Thr. D-amino acid amides and methyl esters also are hydrolyzed, as is glycine amide.. With respect to regulation, inhibited by beta-lactam compounds such as 6-aminopenicillic acid, 7-aminocephalosporanic acid, benzylpenicillin and ampicillin. Inhibited by p-chloromercuribenzoate. Hydrolyzes N-terminal residues in D-amino acid-containing peptides. The chain is D-aminopeptidase from Cereibacter sphaeroides (strain KD131 / KCTC 12085) (Rhodobacter sphaeroides).